The following is a 662-amino-acid chain: UPF0313 protein CPR_1216 (662 aa).

Residues 296 to 567 enclose the Radical SAM core domain; the sequence is AIEEVKFSLV…AMQRALLQFK (272 aa). [4Fe-4S] cluster-binding residues include Cys310, Cys314, and Cys317. The interval 597–662 is disordered; sequence RDKNSFGKGN…QRVSKGKKRR (66 aa). Basic and acidic residues predominate over residues 618–632; sequence SRNENSGRRESEDKK. Residues 633–644 show a composition bias toward basic residues; it reads RSSHSKKQRGNK.

Belongs to the UPF0313 family. It depends on [4Fe-4S] cluster as a cofactor.

The chain is UPF0313 protein CPR_1216 from Clostridium perfringens (strain SM101 / Type A).